A 386-amino-acid chain; its full sequence is Probable pectin lyase E (386 aa).

An N-terminal signal peptide occupies residues 1–16; the sequence is MKTAVLSLFLALQTYA. Cysteine 77 and cysteine 101 form a disulfide bridge. A glycan (N-linked (GlcNAc...) asparagine) is linked at asparagine 124. Arginine 251 is a catalytic residue. Cysteine 326 and cysteine 334 form a disulfide bridge.

It belongs to the polysaccharide lyase 1 family.

The protein localises to the secreted. It catalyses the reaction Eliminative cleavage of (1-&gt;4)-alpha-D-galacturonan methyl ester to give oligosaccharides with 4-deoxy-6-O-methyl-alpha-D-galact-4-enuronosyl groups at their non-reducing ends.. Functionally, pectinolytic enzymes consist of four classes of enzymes: pectin lyase, polygalacturonase, pectin methylesterase and rhamnogalacturonase. Among pectinolytic enzymes, pectin lyase is the most important in depolymerization of pectin, since it cleaves internal glycosidic bonds of highly methylated pectins. The protein is Probable pectin lyase E (pelE) of Aspergillus fumigatus (strain CBS 144.89 / FGSC A1163 / CEA10) (Neosartorya fumigata).